Consider the following 3425-residue polypeptide: Genome polyprotein (3425 aa).

The tract at residues 3 to 16 is interaction with host EXOC1; that stretch reads NKKPGRPGSGRVVN. Residues 38–73 are hydrophobic; homodimerization of capsid protein C; the sequence is VLRGAGPIRFVLALLTFFKFTALRPTIGMLKRWKLV. Positions 105-120 are cleaved as a propeptide — ER anchor for the capsid protein C, removed in mature form by serine protease NS3; that stretch reads GGSCSWIIMLLPIVAG. A helical membrane pass occupies residues 105-125; it reads GGSCSWIIMLLPIVAGLKLGN. Asparagine 135 carries N-linked (GlcNAc...) asparagine; by host glycosylation. 2 helical membrane passes run 247–267 and 273–293; these read WALR…NLGT and IIFT…CLGM. 6 cysteine pairs are disulfide-bonded: cysteine 290–cysteine 317, cysteine 347–cysteine 403, cysteine 361–cysteine 392, cysteine 379–cysteine 408, cysteine 477–cysteine 575, and cysteine 592–cysteine 623. Positions 385 to 398 are fusion peptide; the sequence is DRGWGNGCGLFGKG. The next 2 helical transmembrane spans lie at 740 to 760 and 768 to 788; these read LFGG…LWMG and ISMT…NVNA. A disulfide bond links cysteine 792 and cysteine 803. Residues asparagine 918, asparagine 963, and asparagine 995 are each glycosylated (N-linked (GlcNAc...) asparagine; by host). 4 disulfides stabilise this stretch: cysteine 967/cysteine 1011, cysteine 1068/cysteine 1117, cysteine 1079/cysteine 1100, and cysteine 1101/cysteine 1104. The next 7 membrane-spanning stretches (helical) occupy residues 1138–1158, 1169–1189, 1214–1234, 1290–1310, 1337–1357, 1369–1389, and 1395–1415; these read VMAF…VMIV, TAPI…FGGI, IVHL…IGFL, FALP…IDVV, MLLG…FAGL, WPVS…GGIA, and SMAI…VTGF. Residues 1421–1460 form an interacts with and activates NS3 protease region; sequence LEKASDISWSEEARVTGASQRFDVEIDQDGNMRLLNDPGV. A Peptidase S7 domain is found at 1499–1676; that stretch reads GGVIWDVPAP…EKKEEEVPQV (178 aa). Active-site charge relay system; for serine protease NS3 activity residues include histidine 1549, aspartate 1573, and serine 1633. In terms of domain architecture, Helicase ATP-binding spans 1679–1835; sequence ENMLRKRQLT…DSNSPITDIE (157 aa). An important for RNA-binding region spans residues 1683 to 1686; sequence RKRQ. 1692-1699 lines the ATP pocket; the sequence is LHPGSGKT. Residues 1783 to 1786 carry the DEAH box motif; that stretch reads DEAH. Residues 1845 to 2011 enclose the Helicase C-terminal domain; the sequence is SGYEWITDFQ…GLVAQLYGPE (167 aa). The regulates the ATPase activity of NS3 helicase stretch occupies residues 2162-2166; that stretch reads EELPE. Helical transmembrane passes span 2169 to 2189, 2194 to 2214, 2216 to 2236, 2252 to 2272, 2306 to 2326, 2334 to 2354, 2371 to 2391, and 2441 to 2461; these read ETFL…LFFV, LGKT…LWIA, VPAQ…IVLI, VFMI…MGWL, AWAA…HLII, LMAM…MPFV, FTMT…AFLV, and CVLV…LTLT. In terms of domain architecture, mRNA cap 0-1 NS5-type MT spans 2521–2786; that stretch reads GGGTGRTLGE…DVDLGSGTRA (266 aa). Residue serine 2576 coordinates S-adenosyl-L-methionine. Serine 2576 carries the phosphoserine modification. The For 2'-O-MTase activity role is filled by lysine 2581. Residues glycine 2606, tryptophan 2607, threonine 2624, lysine 2625, and valine 2652 each coordinate S-adenosyl-L-methionine. Catalysis depends on aspartate 2666, which acts as the For 2'-O-MTase activity. Position 2667 (isoleucine 2667) interacts with S-adenosyl-L-methionine. Active-site for 2'-O-MTase activity residues include lysine 2702 and glutamate 2738. Tyrosine 2740 contributes to the S-adenosyl-L-methionine binding site. Zn(2+)-binding residues include glutamate 2960, histidine 2964, cysteine 2969, and cysteine 2972. The 153-residue stretch at 3050–3202 folds into the RdRp catalytic domain; the sequence is GLMYADDTAG…KPADDRFATA (153 aa). Residues histidine 3237, cysteine 3253, and cysteine 3372 each contribute to the Zn(2+) site. The PDZ-binding signature appears at 3423–3425; that stretch reads GVL.

This sequence in the N-terminal section; belongs to the class I-like SAM-binding methyltransferase superfamily. mRNA cap 0-1 NS5-type methyltransferase family. Homodimer. In terms of assembly, forms heterodimers with envelope protein E in the endoplasmic reticulum and Golgi. As to quaternary structure, homodimer; in the endoplasmic reticulum and Golgi. Interacts with protein prM. Interacts with non-structural protein 1. Homodimer; Homohexamer when secreted. Interacts with envelope protein E. NS1 interacts with NS4B. Interacts with host MAVS (via C-terminus); this interaction blocks the interaction of MAVS with RIGI or IFIH1/MDA5. In terms of assembly, interacts (via N-terminus) with serine protease NS3. As to quaternary structure, forms a heterodimer with serine protease NS3. May form homooligomers. Forms a heterodimer with NS2B. Interacts with non-structural protein 2A (via N-terminus). Interacts with NS4B. Interacts with unphosphorylated RNA-directed RNA polymerase NS5; this interaction stimulates RNA-directed RNA polymerase NS5 guanylyltransferase activity. In terms of assembly, interacts with serine protease NS3. As to quaternary structure, homodimer. In terms of processing, specific enzymatic cleavages in vivo yield mature proteins. Cleavages in the lumen of endoplasmic reticulum are performed by host signal peptidase, whereas cleavages in the cytoplasmic side are performed by serine protease NS3. Signal cleavage at the 2K-4B site requires a prior NS3 protease-mediated cleavage at the 4A-2K site. Both NS2A and NS2B proteins are required in cis for NS2A/2B proteolytic processing. Post-translationally, cleaved in post-Golgi vesicles by a host furin, releasing the mature small envelope protein M, and peptide pr. This cleavage is incomplete as up to 30% of viral particles still carry uncleaved prM. N-glycosylated. In terms of processing, N-glycosylated. The excreted form is glycosylated and this is required for efficient secretion of the protein from infected cells. Post-translationally, phosphorylated on serines residues. This phosphorylation may trigger NS5 nuclear localization.

Its subcellular location is the virion. The protein localises to the host nucleus. The protein resides in the host cytoplasm. It is found in the host perinuclear region. It localises to the secreted. Its subcellular location is the virion membrane. The protein localises to the host endoplasmic reticulum membrane. It catalyses the reaction Selective hydrolysis of -Xaa-Xaa-|-Yaa- bonds in which each of the Xaa can be either Arg or Lys and Yaa can be either Ser or Ala.. The catalysed reaction is RNA(n) + a ribonucleoside 5'-triphosphate = RNA(n+1) + diphosphate. It carries out the reaction a ribonucleoside 5'-triphosphate + H2O = a ribonucleoside 5'-diphosphate + phosphate + H(+). The enzyme catalyses ATP + H2O = ADP + phosphate + H(+). It catalyses the reaction a 5'-end (5'-triphosphoguanosine)-ribonucleoside in mRNA + S-adenosyl-L-methionine = a 5'-end (N(7)-methyl 5'-triphosphoguanosine)-ribonucleoside in mRNA + S-adenosyl-L-homocysteine. The catalysed reaction is a 5'-end (N(7)-methyl 5'-triphosphoguanosine)-ribonucleoside in mRNA + S-adenosyl-L-methionine = a 5'-end (N(7)-methyl 5'-triphosphoguanosine)-(2'-O-methyl-ribonucleoside) in mRNA + S-adenosyl-L-homocysteine + H(+). Capsid protein self-assembles to form an icosahedral capsid about 40 nm in diameter. Plays a role in virus budding by binding to the cell membrane and gathering the viral RNA into a nucleocapsid that forms the core of a mature virus particle. Functionally, prevents premature fusion activity of envelope proteins in trans-Golgi by binding to envelope protein E at pH6.0. After virion release in extracellular space, gets dissociated from E dimers. In terms of biological role, acts as a chaperone for envelope protein E during intracellular virion assembly by masking and inactivating envelope protein E fusion peptide. prM is the only viral peptide matured by host furin in the trans-Golgi network probably to avoid catastrophic activation of the viral fusion activity in acidic Golgi compartment prior to virion release. prM-E cleavage is inefficient, and many virions are only partially matured. These uncleaved prM would play a role in immune evasion. Its function is as follows. May play a role in virus budding. Exerts cytotoxic effects by activating a mitochondrial apoptotic pathway through M ectodomain. May display a viroporin activity. Binds to host cell surface receptor and mediates fusion between viral and cellular membranes. Envelope protein is synthesized in the endoplasmic reticulum in the form of heterodimer with protein prM. They play a role in virion budding in the ER, and the newly formed immature particle is covered with 60 spikes composed of heterodimer between precursor prM and envelope protein E. The virion is transported to the Golgi apparatus where the low pH causes dissociation of PrM-E heterodimers and formation of E homodimers. Functionally, involved in immune evasion, pathogenesis and viral replication. Interacts with host MAVS and blocks MAVS binding to RIGI or IFIH1/MDA5, thereby leading to evasion of the innate immune response. Once cleaved off the polyprotein, is targeted to three destinations: the viral replication cycle, the plasma membrane and the extracellular compartment. Essential for viral replication. Required for formation of the replication complex and recruitment of other non-structural proteins to the ER-derived membrane structures. Excreted as a hexameric lipoparticle that plays a role against host immune response. In terms of biological role, component of the viral RNA replication complex that functions in virion assembly. Its function is as follows. Required cofactor for the serine protease function of NS3. May have membrane-destabilizing activity and form viroporins. Displays three enzymatic activities: serine protease, NTPase and RNA helicase. NS3 serine protease, in association with NS2B, performs its autocleavage and cleaves the polyprotein at dibasic sites in the cytoplasm: C-prM, NS2A-NS2B, NS2B-NS3, NS3-NS4A, NS4A-2K and NS4B-NS5. NS3 RNA helicase binds RNA and unwinds dsRNA in the 3' to 5' direction. Functionally, regulates the ATPase activity of the NS3 helicase activity. NS4A allows NS3 helicase to conserve energy during unwinding. In terms of biological role, functions as a signal peptide for NS4B. Its function is as follows. Induces the formation of ER-derived membrane vesicles where the viral replication takes place. Replicates the viral (+) and (-) RNA genome, and performs the capping of genomes in the cytoplasm. NS5 methylates viral RNA cap at guanine N-7 and ribose 2'-O positions. The polypeptide is Genome polyprotein (Anas (ducks)).